The primary structure comprises 208 residues: NAD(P)H-hydrate epimerase (208 aa).

Positions 11–208 (MRAKDQFTIN…VIVADDMGTY (198 aa)) constitute a YjeF N-terminal domain. 59 to 63 (NNGGD) lines the (6S)-NADPHX pocket. Positions 60 and 122 each coordinate K(+). (6S)-NADPHX-binding positions include 126 to 132 (GIGIDRP), tyrosine 137, and aspartate 155. Residue serine 158 coordinates K(+).

Belongs to the NnrE/AIBP family. K(+) is required as a cofactor.

It catalyses the reaction (6R)-NADHX = (6S)-NADHX. It carries out the reaction (6R)-NADPHX = (6S)-NADPHX. Catalyzes the epimerization of the S- and R-forms of NAD(P)HX, a damaged form of NAD(P)H that is a result of enzymatic or heat-dependent hydration. This is a prerequisite for the S-specific NAD(P)H-hydrate dehydratase to allow the repair of both epimers of NAD(P)HX. The sequence is that of NAD(P)H-hydrate epimerase from Limosilactobacillus fermentum (strain NBRC 3956 / LMG 18251) (Lactobacillus fermentum).